A 480-amino-acid polypeptide reads, in one-letter code: Glutamyl-tRNA(Gln) amidotransferase subunit A (480 aa).

Catalysis depends on charge relay system residues lysine 76 and serine 151. The active-site Acyl-ester intermediate is serine 175.

It belongs to the amidase family. GatA subfamily. Heterotrimer of A, B and C subunits.

It carries out the reaction L-glutamyl-tRNA(Gln) + L-glutamine + ATP + H2O = L-glutaminyl-tRNA(Gln) + L-glutamate + ADP + phosphate + H(+). Allows the formation of correctly charged Gln-tRNA(Gln) through the transamidation of misacylated Glu-tRNA(Gln) in organisms which lack glutaminyl-tRNA synthetase. The reaction takes place in the presence of glutamine and ATP through an activated gamma-phospho-Glu-tRNA(Gln). This chain is Glutamyl-tRNA(Gln) amidotransferase subunit A, found in Exiguobacterium sibiricum (strain DSM 17290 / CCUG 55495 / CIP 109462 / JCM 13490 / 255-15).